Consider the following 465-residue polypeptide: UDP-N-acetylmuramate--L-alanine ligase (465 aa).

An ATP-binding site is contributed by 115 to 121 (GTHGKTT).

Belongs to the MurCDEF family.

It localises to the cytoplasm. The enzyme catalyses UDP-N-acetyl-alpha-D-muramate + L-alanine + ATP = UDP-N-acetyl-alpha-D-muramoyl-L-alanine + ADP + phosphate + H(+). It participates in cell wall biogenesis; peptidoglycan biosynthesis. Cell wall formation. This chain is UDP-N-acetylmuramate--L-alanine ligase, found in Renibacterium salmoninarum (strain ATCC 33209 / DSM 20767 / JCM 11484 / NBRC 15589 / NCIMB 2235).